We begin with the raw amino-acid sequence, 159 residues long: Large ribosomal subunit protein uL10 (159 aa).

The protein belongs to the universal ribosomal protein uL10 family. As to quaternary structure, part of the ribosomal stalk of the 50S ribosomal subunit. The N-terminus interacts with L11 and the large rRNA to form the base of the stalk. The C-terminus forms an elongated spine to which L12 dimers bind in a sequential fashion forming a multimeric L10(L12)X complex.

Functionally, forms part of the ribosomal stalk, playing a central role in the interaction of the ribosome with GTP-bound translation factors. In Campylobacter jejuni (strain RM1221), this protein is Large ribosomal subunit protein uL10.